The sequence spans 438 residues: Aflatoxin cluster transcriptional coactivator aflS (438 aa).

One can recognise an HTH iclR-type domain in the interval 65 to 134; the sequence is LALYNQLLAC…PSPGHVAHSV (70 aa). Residues 95–114 constitute a DNA-binding region (H-T-H motif); sequence FEDVADIAGVPECRLRRLVR.

Interacts with aflR.

It is found in the nucleus. Its function is as follows. Transcription factor; part of the gene cluster that mediates the biosynthesis of aflatoxin, a polyketide-derived furanocoumarin which is part of the most toxic and carcinogenic compounds among the known mycotoxins. AflS exhibits no DNA-binding capability on its own, but forms a complex with the other aflatoxin cluster transcription factor aflR and acts as a modulator of aflR's DNA-binding by decreasing its DNA-binding affinity. The polypeptide is Aflatoxin cluster transcriptional coactivator aflS (Aspergillus flavus (strain ATCC 200026 / FGSC A1120 / IAM 13836 / NRRL 3357 / JCM 12722 / SRRC 167)).